Consider the following 303-residue polypeptide: Coenzyme PQQ synthesis protein B (303 aa).

It belongs to the PqqB family.

Its pathway is cofactor biosynthesis; pyrroloquinoline quinone biosynthesis. Functionally, may be involved in the transport of PQQ or its precursor to the periplasm. The chain is Coenzyme PQQ synthesis protein B from Acinetobacter baumannii (strain SDF).